The following is a 472-amino-acid chain: H(+)/Cl(-) exchange transporter ClcA (472 aa).

Topologically, residues 1–32 (MKAETPSFEAHQFVRVRRGDAVRRLIQRDKTP) are cytoplasmic. A helical transmembrane segment spans residues 33–69 (LAVLLMAAVVGTLAGLVGVAFEKSVNWVQNQRIGALA). Residues 70-76 (QVADHWY) are Periplasmic-facing. Residues 77–100 (LVWPLAFILSALLAMVGYFLVRRF) form a helical membrane-spanning segment. A Selectivity filter part_1 motif is present at residues 106–110 (GSGIP). Ser107 contributes to the chloride binding site. The segment at residues 109 to 116 (IPEIEGAL) is an intramembrane region (helical). Over 117 to 123 (EELRPVR) the chain is Cytoplasmic. Helical transmembrane passes span 124–141 (WWRV…TLGA) and 148–166 (EGPM…LDIF). The short motif at 146 to 150 (GREGP) is the Selectivity filter part_2 element. Residues 167–176 (RMRSPEARHT) are Cytoplasmic-facing. Intramembrane regions (helical) lie at residues 177–189 (LLAT…LSAA) and 193–201 (PLAGILFII). At 202–214 (EEMRPQFRYNLIS) the chain is on the cytoplasmic side. The helical transmembrane segment at 215-232 (IKAVFTGVIMSSIVFRIF) threads the bilayer. Topologically, residues 233 to 252 (NGEAAIIEVGKLSNAPVNTL) are periplasmic. The chain crosses the membrane as a helical span at residues 253 to 281 (WLYLVLGMLFGCFGPLFNFLVLRTQDIFQ). At 282 to 287 (RIHGGN) the chain is on the cytoplasmic side. A helical transmembrane segment spans residues 288–309 (IKTWVLMGGVIGGICGLLGLMQ). The Periplasmic segment spans residues 310-329 (PSAVGGGFNLIPIAAAGNFS). Transmembrane regions (helical) follow at residues 330–349 (VGLL…ICFS) and 355–376 (GIFA…MAAI). The Selectivity filter part_3 motif lies at 355 to 359 (GIFAP). The chloride site is built by Ile356 and Phe357. Topologically, residues 377 to 386 (PLFPAYHLDA) are periplasmic. An intramembrane region (helical) is located at residues 387 to 401 (GTFAIAGMGALLAAS). The segment at residues 402–404 (VRA) is an intramembrane region (note=Loop between two helices). Residues 405–416 (PLTGIVLVLEMT) constitute an intramembrane region (helical). The note=Loop between two helices intramembrane region spans 417–421 (DNYQL). The helical transmembrane segment at 422-438 (ILPMIITCLGATLLAQF) threads the bilayer. At 439 to 472 (LGGKPLYSTILQRTLAKQEAEQAAKAQQAPRENT) the chain is on the cytoplasmic side. Tyr445 contributes to the chloride binding site.

This sequence belongs to the chloride channel (TC 2.A.49) family. ClcA subfamily. Homodimer.

Its subcellular location is the cell inner membrane. The enzyme catalyses 2 chloride(in) + H(+)(out) = 2 chloride(out) + H(+)(in). Proton-coupled chloride transporter. Functions as antiport system and exchanges two chloride ions for 1 proton. Probably acts as an electrical shunt for an outwardly-directed proton pump that is linked to amino acid decarboxylation, as part of the extreme acid resistance (XAR) response. This is H(+)/Cl(-) exchange transporter ClcA from Klebsiella pneumoniae (strain 342).